The sequence spans 73 residues: Large ribosomal subunit protein bL31 (73 aa).

This sequence belongs to the bacterial ribosomal protein bL31 family. Type A subfamily. Part of the 50S ribosomal subunit.

Binds the 23S rRNA. The chain is Large ribosomal subunit protein bL31 from Bartonella bacilliformis (strain ATCC 35685 / KC583 / Herrer 020/F12,63).